The following is a 424-amino-acid chain: S-adenosylmethionine synthase (424 aa).

Histidine 14 contributes to the ATP binding site. Position 16 (aspartate 16) interacts with Mg(2+). Residue glutamate 42 coordinates K(+). Residues glutamate 55 and glutamine 98 each contribute to the L-methionine site. The interval 98-108 is flexible loop; the sequence is QSNDISRGIER. Residues 165 to 167, 242 to 243, aspartate 251, 257 to 258, alanine 274, and lysine 278 each bind ATP; these read DAK, KF, and RK. Aspartate 251 contributes to the L-methionine binding site. L-methionine is bound at residue lysine 282.

This sequence belongs to the AdoMet synthase family. Homotetramer; dimer of dimers. Mg(2+) is required as a cofactor. Requires K(+) as cofactor.

The protein resides in the cytoplasm. The enzyme catalyses L-methionine + ATP + H2O = S-adenosyl-L-methionine + phosphate + diphosphate. The protein operates within amino-acid biosynthesis; S-adenosyl-L-methionine biosynthesis; S-adenosyl-L-methionine from L-methionine: step 1/1. Catalyzes the formation of S-adenosylmethionine (AdoMet) from methionine and ATP. The overall synthetic reaction is composed of two sequential steps, AdoMet formation and the subsequent tripolyphosphate hydrolysis which occurs prior to release of AdoMet from the enzyme. In Azobacteroides pseudotrichonymphae genomovar. CFP2, this protein is S-adenosylmethionine synthase.